Consider the following 263-residue polypeptide: Thiamine thiazole synthase (263 aa).

Residues Ser43, 62–63, Gly70, Val134, and 160–162 contribute to the NAD(+) site; these read ER and HID. Positions 162 and 177 each coordinate Fe cation. Ser180 and Met227 together coordinate NAD(+). Arg237 serves as a coordination point for glycine.

The protein belongs to the THI4 family. Homooctamer; tetramer of dimers. Fe(2+) serves as cofactor.

The catalysed reaction is hydrogen sulfide + glycine + NAD(+) = ADP-5-ethyl-4-methylthiazole-2-carboxylate + nicotinamide + 3 H2O + H(+). It participates in cofactor biosynthesis; thiamine diphosphate biosynthesis. Involved in the biosynthesis of the thiazole moiety of thiamine. Catalyzes the conversion of NAD and glycine to adenosine diphosphate 5-(2-hydroxyethyl)-4-methylthiazole-2-carboxylate (ADT), an adenylated thiazole intermediate, using free sulfide as a source of sulfur. This Methanococcus aeolicus (strain ATCC BAA-1280 / DSM 17508 / OCM 812 / Nankai-3) protein is Thiamine thiazole synthase.